Consider the following 619-residue polypeptide: Chaperone protein HscA homolog (619 aa).

The protein belongs to the heat shock protein 70 family.

Functionally, chaperone involved in the maturation of iron-sulfur cluster-containing proteins. Has a low intrinsic ATPase activity which is markedly stimulated by HscB. In Acinetobacter baumannii (strain ATCC 17978 / DSM 105126 / CIP 53.77 / LMG 1025 / NCDC KC755 / 5377), this protein is Chaperone protein HscA homolog.